The chain runs to 90 residues: Barrier-to-autointegration factor A (90 aa).

Belongs to the BAF family. In terms of assembly, homodimer. Interacts with nemp1a and nemp1b. Phosphorylated during S and M phases.

It is found in the nucleus. Its subcellular location is the chromosome. It localises to the nucleus envelope. The protein localises to the cytoplasm. In terms of biological role, non-specific DNA-binding protein that plays key roles in mitotic nuclear reassembly, chromatin organization, DNA damage response, gene expression and intrinsic immunity against foreign DNA. Contains two non-specific double-stranded DNA (dsDNA)-binding sites which promote DNA cross-bridging. Plays a key role in nuclear membrane reformation at the end of mitosis by driving formation of a single nucleus in a spindle-independent manner. Transiently cross-bridges anaphase chromosomes via its ability to bridge distant DNA sites, leading to the formation of a dense chromatin network at the chromosome ensemble surface that limits membranes to the surface. Also acts as a negative regulator of innate immune activation by restricting CGAS activity toward self-DNA upon acute loss of nuclear membrane integrity. Outcompetes CGAS for DNA-binding, thereby preventing CGAS activation and subsequent damaging autoinflammatory responses. Also involved in DNA damage response; acts by inhibiting the ADP-ribosyltransferase activity of PARP1. Involved in the recognition of exogenous dsDNA in the cytosol: associates with exogenous dsDNA immediately after its appearance in the cytosol at endosome breakdown and is required to avoid autophagy. In Xenopus laevis (African clawed frog), this protein is Barrier-to-autointegration factor A (banf1-a).